The following is a 319-amino-acid chain: Pantothenate kinase (319 aa).

96 to 103 is an ATP binding site; the sequence is GSVAVGKS.

This sequence belongs to the prokaryotic pantothenate kinase family.

The protein localises to the cytoplasm. It catalyses the reaction (R)-pantothenate + ATP = (R)-4'-phosphopantothenate + ADP + H(+). The protein operates within cofactor biosynthesis; coenzyme A biosynthesis; CoA from (R)-pantothenate: step 1/5. The polypeptide is Pantothenate kinase (Bacillus velezensis (strain DSM 23117 / BGSC 10A6 / LMG 26770 / FZB42) (Bacillus amyloliquefaciens subsp. plantarum)).